A 65-amino-acid polypeptide reads, in one-letter code: MERYGHLAGVIPVDEIDDMFESNVIGGTSSIDCVRLASNTPEGTVNLTVRIEFCPSAACTYSCRL.

The propeptide at 1-27 (MERYGHLAGVIPVDEIDDMFESNVIGG) is cleaved by FlvT. Threonine 28 bears the 2,3-didehydrobutyrine; by FlvM2 mark. Positions 29 to 33 (SSIDC) form a cross-link, lanthionine (Ser-Cys); by FlvM2. Serine 30 bears the 2,3-didehydroalanine (Ser); by FlvM2 mark. Threonine 44 carries the 2,3-didehydrobutyrine; by FlvM2 modification. A cross-link (beta-methyllanthionine (Thr-Cys); by FlvM2) is located at residues 48–54 (TVRIEFC). Positions 56 to 59 (SAAC) form a cross-link, lanthionine (Ser-Cys); by FlvM2. The beta-methyllanthionine (Thr-Cys); by FlvM2 cross-link spans 60 to 63 (TYSC).

In terms of processing, contains LL-lanthionine, DL-lanthionine, and DL-beta-methyllanthionine, when coepressed in E.coli with the flavecin synthetase FlvM2.

The protein localises to the secreted. Its function is as follows. Lanthionine-containing peptide that does probably not show antibacterial activity, since its analog [+2]Flvbeta.h does not show antibacterial activity against M.luteus. Also does not show antibiotic activity when tested with [Del2]Flvalpha.a, an analog of Flvalpha.a, which is encoded by the same operon than Flvbeta.h. The bactericidal activity of lantibiotics is based on depolarization of energized bacterial cytoplasmic membranes, initiated by the formation of aqueous transmembrane pores. This is Lantipeptide Flvbeta.h from Ruminococcus flavefaciens.